A 425-amino-acid chain; its full sequence is Histone-binding protein RBBP4 (425 aa).

An N-acetylalanine modification is found at Ala2. Residue Lys4 is modified to N6-acetyllysine; alternate. Lys4 participates in a covalent cross-link: Glycyl lysine isopeptide (Lys-Gly) (interchain with G-Cter in SUMO2); alternate. Lys4 is covalently cross-linked (Glycyl lysine isopeptide (Lys-Gly) (interchain with G-Cter in ubiquitin); alternate). WD repeat units lie at residues 32-125, 126-175, 176-223, 225-270, 271-314, 315-371, and 372-404; these read YDLV…NHEG, EVNR…RLRG, HQKE…KTIF, GHTA…HSVD, AHTA…HSFE, SHKD…FIHG, and GHTA…VWQM. Residue Ser110 is modified to Phosphoserine. Lys160 carries the N6-acetyllysine; alternate modification. Lys160 is covalently cross-linked (Glycyl lysine isopeptide (Lys-Gly) (interchain with G-Cter in SUMO2); alternate). Ser355 bears the Phosphoserine mark.

It belongs to the WD repeat RBAP46/RBAP48/MSI1 family. Binds directly to helix 1 of the histone fold of histone H4, a region that is not accessible when H4 is in chromatin. Subunit of the chromatin assembly factor 1 (CAF-1) complex, which is composed of RBBP4, CHAF1B and CHAF1A. Subunit of the core histone deacetylase (HDAC) complex, which is composed of HDAC1, HDAC2, RBBP4 and RBBP7. The core HDAC complex associates with SIN3A, ARID4B/SAP180, SAP18, SAP30, SAP130, SUDS3/SAP45 and possibly ARID4A/RBP1 and ING1 to form the SIN3 HDAC complex. Component of the nucleosome remodeling and deacetylase (NuRD) repressor complex, composed of core proteins MTA1, MTA2, MTA3, RBBP4, RBBP7, HDAC1, HDAC2, MBD2, MBD3, and peripherally associated proteins CDK2AP1, CDK2AP2, GATAD2A, GATAD2B, CHD3, CHD4 and CHD5. The exact stoichiometry of the NuRD complex is unknown, and some subunits such as MBD2 and MBD3, GATAD2A and GATAD2B, and CHD3, CHD4 and CHD5 define mutually exclusive NuRD complexes. Interacts with ZNF512B; the interaction is direct and may play a role in repressing gene expression. The NuRD complex may also interact with MBD3L1 and MBD3L2. Component of the PRC2 complex, which consists of the core subunits EED, EZH1 or EZH2, SUZ12, and RBBP4, and various combinations of accessory subunits including AEBP2, JARID2, PHF19, MTF2 and EPOP. Forms a monomeric PRC2.2 (class 2) complex consisting of at least SUZ12, RBBP4, AEBP2 and JARID2. Forms a dimeric PRC2.1 (class 1, PRC-PCL) complex consisting of at least SUZ12, RBBP4, and PHF19; PHF19 stabilizes the dimeric structure which enhances PRC2 interaction with chromatin. Component of the NURF-1 ISWI chromatin remodeling complex (also called the nucleosome-remodeling factor (NURF) complex) at least composed of SMARCA1 (isoform 2), BPTF, RBBP4 and RBBP7. Within the complex interacts with isoform 2 of SMARCA1. Component of the BPFT-SMARCA1 complex at least composed of SMARCA1 (isoform 1), BPFT, RBBP4 and RBBP7; the complex is catalytically inactive and does not remodel chromatin. Within the complex interacts with isoform 1 of SMARCA1. Interacts with the ISWI chromatin remodeling complex component SMARCA5; the interaction is direct. Interacts with the viral protein-binding domain of the retinoblastoma protein (RB1). Component of the DREAM complex (also named LINC complex) at least composed of E2F4, E2F5, LIN9, LIN37, LIN52, LIN54, MYBL1, MYBL2, RBL1, RBL2, RBBP4, TFDP1 and TFDP2. The complex exists in quiescent cells where it represses cell cycle-dependent genes. It dissociates in S phase when LIN9, LIN37, LIN52 and LIN54 form a subcomplex that binds to MYBL2. Found in a complex composed of at least SINHCAF, SIN3A, HDAC1, SAP30, RBBP4, OGT and TET1. Interacts with ZNF827; the interaction is direct and recruits RBBP4 to telomeres. Interacts with MTA1; the interaction is direct and mutually exclusive with binding histone H4. Interacts with ARMC12 (via ARM domains). Interacts with BRCA1. Interacts with CDK2AP1. Interacts with CREBBP, and this interaction may be enhanced by the binding of phosphorylated CREB1 to CREBBP. Interacts with ERCC6. Interacts with HDAC7. Interacts with PHF6. Interacts with PWWP2B. Interacts with SPEN/MINT. Interacts with SUV39H1.

The protein resides in the nucleus. It is found in the chromosome. Its subcellular location is the telomere. Its function is as follows. Core histone-binding subunit that may target chromatin assembly factors, chromatin remodeling factors and histone deacetylases to their histone substrates in a manner that is regulated by nucleosomal DNA. Component of the chromatin assembly factor 1 (CAF-1) complex, which is required for chromatin assembly following DNA replication and DNA repair. Component of the core histone deacetylase (HDAC) complex, which promotes histone deacetylation and consequent transcriptional repression. Component of the nucleosome remodeling and histone deacetylase complex (the NuRD complex), which promotes transcriptional repression by histone deacetylation and nucleosome remodeling. Component of the PRC2 complex, which promotes repression of homeotic genes during development. Component of the NURF (nucleosome remodeling factor) complex. The sequence is that of Histone-binding protein RBBP4 (RBBP4) from Pongo abelii (Sumatran orangutan).